Here is a 477-residue protein sequence, read N- to C-terminus: Oleate hydroxylase FAH12 (477 aa).

The tract at residues 26–48 is disordered; the sequence is YESSAAVSPAESPRTSASSTSLS. Residues 27–48 show a composition bias toward low complexity; that stretch reads ESSAAVSPAESPRTSASSTSLS. The next 2 helical transmembrane spans lie at 101-118 and 133-153; these read AYVLRDLLCLSTTFYLFH and FVLWSIYTVLQGLFATGLWVI. Residues 155–159 carry the Histidine box-1 motif; sequence HECGH. The helical transmembrane segment at 167-187 threads the bilayer; that stretch reads FISDLTGWVIHSALLVPYFSW. The Histidine box-2 signature appears at 191–195; sequence HSAHH. 3 consecutive transmembrane segments (helical) span residues 234 to 254, 299 to 319, and 327 to 347; these read PIYTALHLVGKQLIGWPSYLM, YIVLSDIGLGLAIAALVYLGN, and AVWYFLPYLWVNHWLVAITFL.

This sequence belongs to the fatty acid desaturase type 1 family.

The protein resides in the microsome membrane. It catalyses the reaction (9Z)-octadecenoate + AH2 + O2 = (12R)-hydroxy-(9Z)-octadecenoate + A + H2O. It functions in the pathway lipid metabolism; monounsaturated fatty acid biosynthesis. Oleate hydroxylase involved in the biosynthesis of ricinoleate (12-hydroxy-cis-9-octadecenoate), that is present at high levels in C.purpurea sclerotium tissue. Exhibits delta(12) hydroxylase activity on 16C and 18C monounsaturated fatty acids (i.e. oleic and palmitoleic acids), and, to a lower extent, gamma(3) hydroxylase activity on ricinoleate. In Claviceps purpurea (Ergot fungus), this protein is Oleate hydroxylase FAH12.